The primary structure comprises 435 residues: IAA-amino acid hydrolase ILR1-like 5 (435 aa).

The first 25 residues, 1–25 (MSFCKLVSFVLILHLLNSCLISCSS), serve as a signal peptide directing secretion. 5 residues coordinate Mn(2+): cysteine 134, histidine 136, glutamate 170, histidine 194, and histidine 397. The Prevents secretion from ER signature appears at 432-435 (KDEL).

It belongs to the peptidase M20 family.

The protein localises to the endoplasmic reticulum lumen. Functionally, hydrolyzes certain amino acid conjugates of the plant growth regulator indole-3-acetic acid (IAA). This is IAA-amino acid hydrolase ILR1-like 5 from Arabidopsis thaliana (Mouse-ear cress).